A 474-amino-acid chain; its full sequence is uncharacterized protein (474 aa).

A compositionally biased stretch (polar residues) spans 1-14 (MGSRYPSHQLSNGL). Residues 1-137 (MGSRYPSHQL…QSGGVTRQNS (137 aa)) are disordered. A Phosphoserine modification is found at Ser45. 3 stretches are compositionally biased toward polar residues: residues 73–83 (RSGSFAGTAQS), 97–113 (SLAS…NSGP), and 125–137 (SGPQ…RQNS). A Phosphoserine modification is found at Ser169. 2 consecutive transmembrane segments (helical) span residues 210 to 230 (VLWL…FILG) and 236 to 256 (ILLV…IWNI).

The protein resides in the membrane. This is an uncharacterized protein from Arabidopsis thaliana (Mouse-ear cress).